The following is a 185-amino-acid chain: Elongation factor P (185 aa).

It belongs to the elongation factor P family.

It is found in the cytoplasm. The protein operates within protein biosynthesis; polypeptide chain elongation. Functionally, involved in peptide bond synthesis. Stimulates efficient translation and peptide-bond synthesis on native or reconstituted 70S ribosomes in vitro. Probably functions indirectly by altering the affinity of the ribosome for aminoacyl-tRNA, thus increasing their reactivity as acceptors for peptidyl transferase. The polypeptide is Elongation factor P (Brevibacillus brevis (strain 47 / JCM 6285 / NBRC 100599)).